Here is a 250-residue protein sequence, read N- to C-terminus: Aquaporin TIP2-3 (250 aa).

Residue Met-1 is modified to N-acetylmethionine. Over 1–24 (MVKIEVGSVGDSFSVSSLKAYLSE) the chain is Cytoplasmic. Residue Lys-3 is modified to N6,N6-dimethyllysine. Residues 25 to 45 (FIATLLFVFAGVGSAVAFAKL) form a helical membrane-spanning segment. Topologically, residues 46-54 (TSDGALDPA) are vacuolar. A helical membrane pass occupies residues 55–75 (GLVAIAIAHAFALFVGVSIAA). Topologically, residues 76-101 (NISGGHLNPAVTLGLAIGGNITLITG) are cytoplasmic. The NPA 1 motif lies at 83–85 (NPA). A helical membrane pass occupies residues 102–122 (FFYWIAQCLGSIVACLLLVFV). The Vacuolar segment spans residues 123–134 (TNGKSVPTHGVS). A helical membrane pass occupies residues 135–155 (AGLGAVEGVVMEIVVTFALVY). Residues 156 to 168 (TVYATAADPKKGS) lie on the Cytoplasmic side of the membrane. Residues 169-189 (LGTIAPIAIGFIVGANILAAG) form a helical membrane-spanning segment. The Vacuolar segment spans residues 190 to 217 (PFSGGSMNPARSFGPAVVSGDLSQIWIY). Residues 197–199 (NPA) carry the NPA 2 motif. The helical transmembrane segment at 218–238 (WVGPLVGGALAGLIYGDVFIG) threads the bilayer. Residues 239–250 (SYEAVETREIRV) are Cytoplasmic-facing.

This sequence belongs to the MIP/aquaporin (TC 1.A.8) family. TIP (TC 1.A.8.10) subfamily. As to quaternary structure, interacts with cucumber mosaic virus (CMV) Protein 1a. In terms of tissue distribution, widely expressed.

Its subcellular location is the vacuole membrane. Functionally, transports methylammonium or ammonium in yeast cells, preferentially at high medium pH. May participate in vacuolar compartmentation and detoxification of ammonium. The chain is Aquaporin TIP2-3 (TIP2-3) from Arabidopsis thaliana (Mouse-ear cress).